We begin with the raw amino-acid sequence, 189 residues long: Cold-regulated 413 plasma membrane protein 3 (189 aa).

The Extracellular portion of the chain corresponds to Met1–Pro24. Residues Val25–Leu45 traverse the membrane as a helical segment. At Asp46–Asn55 the chain is on the cytoplasmic side. A helical transmembrane segment spans residues Ile56–Val76. Topologically, residues Leu77–Asn79 are extracellular. Residues Gly80–Phe100 form a helical membrane-spanning segment. Residues His101–Leu104 lie on the Cytoplasmic side of the membrane. The chain crosses the membrane as a helical span at residues Glu105–Phe125. The Extracellular portion of the chain corresponds to Arg126–Ser168. The chain crosses the membrane as a helical span at residues Ile169 to Leu189.

The protein belongs to the Cold-regulated 413 protein family.

The protein localises to the cell membrane. In Arabidopsis thaliana (Mouse-ear cress), this protein is Cold-regulated 413 plasma membrane protein 3.